The sequence spans 608 residues: Thiol:disulfide interchange protein DsbD (608 aa).

The first 22 residues, 1–22, serve as a signal peptide directing secretion; that stretch reads MKNLLSLCFLMLAAFTLNPAAA. Cys135 and Cys141 are disulfide-bonded. A compositionally biased stretch (polar residues) spans 161-173; sequence SAPSSDAAQQTNE. The tract at residues 161–180 is disordered; that stretch reads SAPSSDAAQQTNEGEVKKSE. The next 8 membrane-spanning stretches (helical) occupy residues 194 to 214, 241 to 261, 273 to 293, 314 to 334, 352 to 372, 387 to 407, 414 to 434, and 456 to 476; these read LLTLIAFFVGGLLLSFTPCVF, FFYVQGMAITYTLLGVVVAMA, IVLIGLSILFIFLALSMFGVF, GGSITGVLMMGVISGLVASPC, VVLGASALYALSLGMGLPLLI, WMNIIKNIFGLLLLAVPVFLL, VASQALWALLILVSASYFYVA, and SLVIFLMLFFGANLAYQLIYP. An intrachain disulfide couples Cys212 to Cys334. The 140-residue stretch at 469–608 folds into the Thioredoxin domain; that stretch reads LAYQLIYPSS…FSAHVKSIFK (140 aa). Cys522 and Cys525 are disulfide-bonded.

The protein belongs to the thioredoxin family. DsbD subfamily.

Its subcellular location is the cell inner membrane. The enzyme catalyses [protein]-dithiol + NAD(+) = [protein]-disulfide + NADH + H(+). The catalysed reaction is [protein]-dithiol + NADP(+) = [protein]-disulfide + NADPH + H(+). In terms of biological role, required to facilitate the formation of correct disulfide bonds in some periplasmic proteins and for the assembly of the periplasmic c-type cytochromes. Acts by transferring electrons from cytoplasmic thioredoxin to the periplasm. This transfer involves a cascade of disulfide bond formation and reduction steps. The sequence is that of Thiol:disulfide interchange protein DsbD from Colwellia psychrerythraea (strain 34H / ATCC BAA-681) (Vibrio psychroerythus).